The primary structure comprises 651 residues: MSEKIYPVTKPVKARALIDKEKYLKWYEESVENPDKFWGKHGKRIDWFKPYTKVKNTSFTGKVSIKWFEDGQTNVSYNCIDRHLKTNGDQVAIIWEGDNPYIDKKVTYNELYEHVCRMANVLKKHGVKKGDRVTIYMPMIPEAAYAMLACARIGAVHSVVFGGFSPEALAGRIVDCESTFVITCDEGLRGGKPVPLKDNTDTAIHIAARQHVHVSKVLVVRRTGGKTGWAPGRDLWHHQEIATVKPECPPVKMKAEDPLFILYTSGSTGKPKGVLHTTGGYLVYAAMTHEYVFDYHDGDVYWCTADVGWVTGHSYIVYGPLANCATTLMFEGVPNFPDQGRFWEVIDKHKVNIFYTAPTAIRSLMGAGDDFVTRSSRSSLRLLGTVGEPINPEAWEWYYNVVGDKRCPVIDTWWQTETGGHMITPLPGAIDLKPGSATVPFFGIKPELVDNEGKVLEGAADGNLCITDSWPGQMRTVYGDHDRFIQTYFSTYKGKYFTGDGCRRDADGYYWITGRVDDVLNVSGHRLGTAEVESALVSHNLVSEAAVVGYPHPIKGQGIYCYVTLMAGHEGTDTLRQDLVKHVRAEIGPIAAPDKIQFAPGLPKTRSGKIMRRILRKIAEDDFGALGDTSTLADPAVVDDLIANRQNKATA.

Residues 189–192 (RGGK), threonine 311, and asparagine 335 each bind CoA. Residues 387-389 (GEP), 411-416 (DTWWQT), aspartate 500, and arginine 515 contribute to the ATP site. Position 523 (serine 523) interacts with CoA. Arginine 526 is a binding site for ATP. Positions 537, 539, and 542 each coordinate Mg(2+). Residue arginine 584 coordinates CoA. At lysine 609 the chain carries N6-acetyllysine.

This sequence belongs to the ATP-dependent AMP-binding enzyme family. Mg(2+) is required as a cofactor. In terms of processing, acetylated. Deacetylation by the SIR2-homolog deacetylase activates the enzyme.

The catalysed reaction is acetate + ATP + CoA = acetyl-CoA + AMP + diphosphate. Catalyzes the conversion of acetate into acetyl-CoA (AcCoA), an essential intermediate at the junction of anabolic and catabolic pathways. AcsA undergoes a two-step reaction. In the first half reaction, AcsA combines acetate with ATP to form acetyl-adenylate (AcAMP) intermediate. In the second half reaction, it can then transfer the acetyl group from AcAMP to the sulfhydryl group of CoA, forming the product AcCoA. The chain is Acetyl-coenzyme A synthetase from Rhizobium leguminosarum bv. trifolii (strain WSM2304).